Reading from the N-terminus, the 293-residue chain is MPWIQLKLNTTGANAEDLSDALMEAGAVSITFQDTHDTPVFEPLPGETRLWGDTDVIGLFDAETDMNDVVAILENHPLLGAGFAHKIEQLEDKDWEREWMDNFHPMRFGERLWICPSWRDVPDENAVNVMLDPGLAFGTGTHPTTSLCLQWLDSLDLTGKTVIDFGCGSGILAIAALKLGAAKAIGIDIDPQAIQASRDNAERNGVSDRLELYLPKDQPEEMKADVVVANILAGPLRELAPLISVLPVSGGLLGLSGILASQAESVCEAYADSFALDPVVEKEEWCRITGRKN.

Positions 145, 166, 188, and 230 each coordinate S-adenosyl-L-methionine.

The protein belongs to the methyltransferase superfamily. PrmA family.

It localises to the cytoplasm. The enzyme catalyses L-lysyl-[protein] + 3 S-adenosyl-L-methionine = N(6),N(6),N(6)-trimethyl-L-lysyl-[protein] + 3 S-adenosyl-L-homocysteine + 3 H(+). Functionally, methylates ribosomal protein L11. The sequence is that of Ribosomal protein L11 methyltransferase from Escherichia coli O139:H28 (strain E24377A / ETEC).